Reading from the N-terminus, the 555-residue chain is Glutamate--tRNA ligase (555 aa).

The 'HIGH' region motif lies at 100 to 110 (PNPSGPLHIGH).

This sequence belongs to the class-I aminoacyl-tRNA synthetase family. Glutamate--tRNA ligase type 2 subfamily.

It is found in the cytoplasm. It carries out the reaction tRNA(Glu) + L-glutamate + ATP = L-glutamyl-tRNA(Glu) + AMP + diphosphate. In terms of biological role, catalyzes the attachment of glutamate to tRNA(Glu) in a two-step reaction: glutamate is first activated by ATP to form Glu-AMP and then transferred to the acceptor end of tRNA(Glu). This chain is Glutamate--tRNA ligase, found in Methanococcus maripaludis (strain DSM 14266 / JCM 13030 / NBRC 101832 / S2 / LL).